Consider the following 125-residue polypeptide: Small ribosomal subunit protein uS13 (125 aa).

A disordered region spans residues 99-125 (RGQRTKTNARTRKGKRKTVANKKMAAK).

Belongs to the universal ribosomal protein uS13 family. Part of the 30S ribosomal subunit. Forms a loose heterodimer with protein S19. Forms two bridges to the 50S subunit in the 70S ribosome.

Functionally, located at the top of the head of the 30S subunit, it contacts several helices of the 16S rRNA. In the 70S ribosome it contacts the 23S rRNA (bridge B1a) and protein L5 of the 50S subunit (bridge B1b), connecting the 2 subunits; these bridges are implicated in subunit movement. Contacts the tRNAs in the A and P-sites. This chain is Small ribosomal subunit protein uS13, found in Borrelia turicatae (strain 91E135).